The primary structure comprises 120 residues: MVQRLTYRKRHSYATKSNQHRVVKTPGGKLIYQSTKKRASGPKCPVTGKRIQGIPHLRPTEYKRSRLSRNRRTVNRAYGGVLSGSAVRERIIRAFLVEEQKIVKKVLKIQKAKEKLAAKS.

The protein belongs to the eukaryotic ribosomal protein eL34 family.

The protein is Large ribosomal subunit protein eL34 (RPL34) of Nicotiana tabacum (Common tobacco).